Here is a 143-residue protein sequence, read N- to C-terminus: Large ribosomal subunit protein mL51 (143 aa).

The N-terminal 52 residues, M1–E52, are a transit peptide targeting the mitochondrion.

The protein belongs to the mitochondrion-specific ribosomal protein mL51 family. Component of the mitochondrial ribosome large subunit (39S) which comprises a 16S rRNA and about 50 distinct proteins.

It is found in the mitochondrion. The sequence is that of Large ribosomal subunit protein mL51 (MRPL51) from Gallus gallus (Chicken).